The sequence spans 154 residues: Putative pre-16S rRNA nuclease (154 aa).

The protein belongs to the YqgF nuclease family.

Its subcellular location is the cytoplasm. Could be a nuclease involved in processing of the 5'-end of pre-16S rRNA. The sequence is that of Putative pre-16S rRNA nuclease from Ruegeria pomeroyi (strain ATCC 700808 / DSM 15171 / DSS-3) (Silicibacter pomeroyi).